A 210-amino-acid chain; its full sequence is MKTTAQTAPARSALQDASDTQLAIELIGLGARPQVVEAEVTLSRSRVYRLYRELTGGSPPKGMLPFSADWFVTWRPNAHASYLLSVHEYMQQRAGLPGIRAVLNSYRVYAEHMKANNEECLISFTRFWTLVRFCEGGLLQLSTCPCCGGRFVTHAHEPLASFICTLCQPPSRVRRSVRRETPHATANAPAAVLGNRPPVAMPGFGMVPAL.

Zn(2+) is bound by residues Cys144, Cys147, Cys164, and Cys167.

This sequence belongs to the FlhC family. As to quaternary structure, heterohexamer composed of two FlhC and four FlhD subunits. Each FlhC binds a FlhD dimer, forming a heterotrimer, and a hexamer assembles by dimerization of two heterotrimers. It depends on Zn(2+) as a cofactor.

It localises to the cytoplasm. Functions in complex with FlhD as a master transcriptional regulator that regulates transcription of several flagellar and non-flagellar operons by binding to their promoter region. Activates expression of class 2 flagellar genes, including fliA, which is a flagellum-specific sigma factor that turns on the class 3 genes. Also regulates genes whose products function in a variety of physiological pathways. The protein is Flagellar transcriptional regulator FlhC of Cupriavidus pinatubonensis (strain JMP 134 / LMG 1197) (Cupriavidus necator (strain JMP 134)).